The chain runs to 84 residues: Toxin NvePTx1 (84 aa).

A signal peptide spans 1-21; the sequence is MFSARLVLVFAVVLCIQLCNA. Residues 22-34 constitute a propeptide that is removed on maturation; the sequence is SWLDERAMTQEKR.

The protein belongs to the sea anemone type 5 potassium channel toxin family. Post-translationally, contains 4 disulfide bonds. As to expression, in unfertilized eggs and early post-fertilization stages, is expressed uniformly. In gastrulae, the expression becomes spatially-localized and seems to be absent from the oral and aboral poles. In planulae, the expression is clearly observed in the ectoderm in packed gland cells absent from the two body poles, and upon metamorphosis, the expression diminishes. There is two types of gland cells, one large and elongated and another small and round. This toxin is maternally deposited at both protein and RNA levels.

The protein localises to the secreted. It localises to the nematocyst. In terms of biological role, neurotoxin that is probably only defensive. Acts as a voltage-gated potassium channel (Kv) inhibitor. In vivo, induces a rapid increase in swimming speed on zebrafish larvae, as well as death which occurs between 2 and 18 hours later. This Nematostella vectensis (Starlet sea anemone) protein is Toxin NvePTx1.